Consider the following 311-residue polypeptide: Olfactory receptor 2M4 (311 aa).

At 1 to 25 (MVWENQTFNSIFILLGIFNHSPTHT) the chain is on the extracellular side. The N-linked (GlcNAc...) asparagine glycan is linked to N5. Residues 26 to 49 (FLFSLVLGIFSLALMENISMVLLI) traverse the membrane as a helical segment. The Cytoplasmic segment spans residues 50–57 (YIEKQLHT). A helical transmembrane segment spans residues 58 to 79 (PMYFLLSQLSLMDLMLICTTLP). Topologically, residues 80 to 100 (KMIFSYLSGKKSISLAGCGTQ) are extracellular. C97 and C189 are oxidised to a cystine. The chain crosses the membrane as a helical span at residues 101-120 (IFFYVSLLGAECFLLAVMAY). Topologically, residues 121–139 (DRYVAICHPLQYTILMNPK) are cytoplasmic. A helical transmembrane segment spans residues 140–158 (LCVFMTVASWTLGSLDGII). Over 159–195 (VLAAVLSFSYCSSLEIHHFFCDVAALLPLSCTETSAF) the chain is Extracellular. The helical transmembrane segment at 196-219 (ERLLVICCVVMLIFPVSVIILSYS) threads the bilayer. At 220–236 (HVLRAVIHMGSGESRRK) the chain is on the cytoplasmic side. Residues 237 to 259 (AFTTCSSHLSVVGLYYGAAMFMY) traverse the membrane as a helical segment. Residues 260 to 272 (MRPASKHTPDQDK) lie on the Extracellular side of the membrane. The helical transmembrane segment at 273–292 (MVSAFYTILTPMLNPLIYSL) threads the bilayer. Residues 293 to 311 (RNKEVFRALQKVLKKRKLI) lie on the Cytoplasmic side of the membrane.

The protein belongs to the G-protein coupled receptor 1 family.

It localises to the cell membrane. Functionally, odorant receptor. In Homo sapiens (Human), this protein is Olfactory receptor 2M4 (OR2M4).